Reading from the N-terminus, the 867-residue chain is MRFSWLEVAVTAASLANANVCIPLFPWYVSSPPFYPSPWANGQGEWAEAHQRAVEIVSQMTLTEKVNLTTGTGWMMEECVGQTGSVPRLGINWGLCGQDSPLGIRFSDLNSAFPAGINVAATWDKTLAYLRGKAMGEEFNDKGIDIQLGPAAGPLGKYPDGGRIWEGFSPDPALTGVLFAETIKGIQDAGVIATAKHYILNEQEQFRQVAEAQGYGYNITETLSSNVDDKTMHELYLWPFADAVRAGVGAIMCSYNQINNSYGCQNSQTLNKLLKAELGFQGFVMSDWSAHHSGVGAALAGLDMSMPGDISFDDGLSFWGANMTVGVLNGTIPAWRVDDMAVRIMTAYYKVGRDRLRVPPNFSSWTRDEYGYEHAAVSEGAWKKVNDFVNVQRDHAQLIREVGSASTVLLKNVGALPLTGKERKVGIFGEDAGSNPWGPNGCENRGCDNGTLAMAWGSGTAEFPYLVTPEQAIQSEVIKNGGNVFPVTHNGALTQMANIASQSSVSLVFVNADAGEGFISVDGNIGDRKNLTLWKNGEEVIKTVASHSNNTVVVIHSVGPILVDEWHDNPNITAILWAGLPGQESGNSIADVLYGRVNPSAKTPFTWGKTRESYGAPLVTKPNNGNGAPQDDFSEGVFIDYRYFDKRNETPVYEFGFGLSYTSFGYSHLRVQPLNGSTYVPATGTTGPAPAYGSIGSAADYLFPEGLKRITKFIYPWLNSTDLKASSADPNYGWEDSEYIPEAATDGSPQPILKAGGAPGGNPTLYHDLVKVSATITNTGNVAGYEVPQLYVSLGGPNEPRVVLRKFDRIHLAPGEQKVWTTTLTRRDLANWDVEAQDWVITKYPKRVYVGSSSRKLPLRAPLPRVQ.

Positions 1–18 (MRFSWLEVAVTAASLANA) are cleaved as a signal peptide. Residues Asn-67, Asn-218, and Asn-259 are each glycosylated (N-linked (GlcNAc...) asparagine). Asp-287 is a catalytic residue. Asn-322, Asn-329, Asn-361, Asn-449, Asn-530, Asn-549, Asn-571, Asn-675, and Asn-719 each carry an N-linked (GlcNAc...) asparagine glycan.

It belongs to the glycosyl hydrolase 3 family.

It is found in the secreted. The catalysed reaction is Hydrolysis of terminal, non-reducing beta-D-glucosyl residues with release of beta-D-glucose.. It functions in the pathway glycan metabolism; cellulose degradation. In terms of biological role, beta-glucosidases are one of a number of cellulolytic enzymes involved in the degradation of cellulosic biomass. Catalyzes the last step releasing glucose from the inhibitory cellobiose. The polypeptide is Probable beta-glucosidase A (bglA) (Aspergillus clavatus (strain ATCC 1007 / CBS 513.65 / DSM 816 / NCTC 3887 / NRRL 1 / QM 1276 / 107)).